The sequence spans 345 residues: Phosphoribosylformylglycinamidine cyclo-ligase (345 aa).

It belongs to the AIR synthase family.

The protein localises to the cytoplasm. The enzyme catalyses 2-formamido-N(1)-(5-O-phospho-beta-D-ribosyl)acetamidine + ATP = 5-amino-1-(5-phospho-beta-D-ribosyl)imidazole + ADP + phosphate + H(+). It participates in purine metabolism; IMP biosynthesis via de novo pathway; 5-amino-1-(5-phospho-D-ribosyl)imidazole from N(2)-formyl-N(1)-(5-phospho-D-ribosyl)glycinamide: step 2/2. The protein is Phosphoribosylformylglycinamidine cyclo-ligase of Escherichia coli (strain K12 / MC4100 / BW2952).